Consider the following 485-residue polypeptide: NADH-quinone oxidoreductase subunit N (485 aa).

Transmembrane regions (helical) follow at residues 3-23 (LFMP…TDLF), 30-50 (HLAY…VLNW), 67-87 (YASF…MASV), 96-116 (FQGE…MMAS), 120-140 (LITM…LVGF), 154-174 (LLLG…IYGF), 202-222 (FILG…AVPF), 247-267 (AAGF…PLAL), 271-291 (WALI…VLAI), 299-319 (MLGY…AAVG), 332-352 (LFYL…IIAI), 375-395 (ASAL…AGFL), 411-431 (WLMI…FNVI), and 453-473 (LALG…ETLL).

Belongs to the complex I subunit 2 family. As to quaternary structure, NDH-1 is composed of 14 different subunits. Subunits NuoA, H, J, K, L, M, N constitute the membrane sector of the complex.

The protein localises to the cell membrane. It carries out the reaction a quinone + NADH + 5 H(+)(in) = a quinol + NAD(+) + 4 H(+)(out). NDH-1 shuttles electrons from NADH, via FMN and iron-sulfur (Fe-S) centers, to quinones in the respiratory chain. The immediate electron acceptor for the enzyme in this species is believed to be ubiquinone. Couples the redox reaction to proton translocation (for every two electrons transferred, four hydrogen ions are translocated across the cytoplasmic membrane), and thus conserves the redox energy in a proton gradient. The chain is NADH-quinone oxidoreductase subunit N from Dehalococcoides mccartyi (strain ATCC BAA-2100 / JCM 16839 / KCTC 5957 / BAV1).